Here is a 455-residue protein sequence, read N- to C-terminus: Chromosomal replication initiator protein DnaA (455 aa).

Residues 1-74 (MSEQEIWEKV…LYEAIGHEIA (74 aa)) are domain I, interacts with DnaA modulators. Residues 74–116 (APVFYTEEELKSLHTSEQKEENQPEQPAKKYTPGVDEAVIGGE) are domain II. A compositionally biased stretch (basic and acidic residues) spans 85-95 (SLHTSEQKEEN). Positions 85–104 (SLHTSEQKEENQPEQPAKKY) are disordered. Positions 117–333 (QFNTHNTFET…GALTRVLAFS (217 aa)) are domain III, AAA+ region. ATP-binding residues include G161, G163, K164, and T165. A domain IV, binds dsDNA region spans residues 334-455 (KLQGQPITTE…ENLEKEIRNQ (122 aa)).

It belongs to the DnaA family. Oligomerizes as a right-handed, spiral filament on DNA at oriC.

It localises to the cytoplasm. In terms of biological role, plays an essential role in the initiation and regulation of chromosomal replication. ATP-DnaA binds to the origin of replication (oriC) to initiate formation of the DNA replication initiation complex once per cell cycle. Binds the DnaA box (a 9 base pair repeat at the origin) and separates the double-stranded (ds)DNA. Forms a right-handed helical filament on oriC DNA; dsDNA binds to the exterior of the filament while single-stranded (ss)DNA is stabiized in the filament's interior. The ATP-DnaA-oriC complex binds and stabilizes one strand of the AT-rich DNA unwinding element (DUE), permitting loading of DNA polymerase. After initiation quickly degrades to an ADP-DnaA complex that is not apt for DNA replication. Binds acidic phospholipids. This chain is Chromosomal replication initiator protein DnaA, found in Staphylococcus saprophyticus subsp. saprophyticus (strain ATCC 15305 / DSM 20229 / NCIMB 8711 / NCTC 7292 / S-41).